The following is a 334-amino-acid chain: Histo-blood group ABO system transferase 2 (334 aa).

Topologically, residues 1-15 (MKDLRFGRLKCYSLH) are cytoplasmic. Residues 16 to 36 (LGILPLTVLVLVFFCFVCLSL) traverse the membrane as a helical; Signal-anchor for type II membrane protein segment. Topologically, residues 37 to 334 (RSQEWGHPGA…VPKNHQAIRN (298 aa)) are lumenal. Asparagine 94 carries N-linked (GlcNAc...) asparagine glycosylation. UDP-N-acetyl-alpha-D-galactosamine-binding positions include 102-104 (FAV), tyrosine 107, and 192-194 (DVD). Residues aspartate 192 and aspartate 194 each coordinate Mn(2+). An alpha-L-fucosyl-(1-&gt;2)-beta-D-galactosyl derivative-binding residues include histidine 214, threonine 226, glutamate 284, and aspartate 307. The active-site Nucleophile is the glutamate 284.

It belongs to the glycosyltransferase 6 family. Mn(2+) is required as a cofactor. Large intestine, caecum, stomach, pancreas, submaxillary gland and kidney (at protein level). Ubiquitous.

It is found in the golgi apparatus. It localises to the golgi stack membrane. The protein resides in the secreted. The catalysed reaction is an alpha-L-fucosyl-(1-&gt;2)-beta-D-galactosyl derivative + UDP-N-acetyl-alpha-D-galactosamine = an N-acetyl-alpha-D-galactosaminyl-(1-&gt;3)-[alpha-L-fucosyl-(1-&gt;2)]-beta-D-galactosyl derivative + UDP + H(+). It catalyses the reaction an alpha-L-fucosyl-(1-&gt;2)-beta-D-galactosyl derivative + UDP-alpha-D-galactose = an alpha-D-galactosyl-(1-&gt;3)-[alpha-L-fucosyl-(1-&gt;2)]-beta-D-galactosyl derivative + UDP + H(+). It functions in the pathway protein modification; protein glycosylation. In terms of biological role, possesses strong B transferase activity and weak A transferase activity. This chain is Histo-blood group ABO system transferase 2 (Abo2), found in Rattus norvegicus (Rat).